Here is a 142-residue protein sequence, read N- to C-terminus: Multiprotein-bridging factor 1b (142 aa).

The disordered stretch occupies residues 49–75 (NAGSNKAASSGTSLNTKKLDDDTENLS). Positions 50-64 (AGSNKAASSGTSLNT) are enriched in polar residues. Residues 65-75 (KKLDDDTENLS) show a composition bias toward basic and acidic residues. In terms of domain architecture, HTH cro/C1-type spans 87–141 (IMQARGEKKLTQSQLAHLINEKPQVIQEYESGKAIPNQQILSKLERALGAKLRGK). Positions 98–117 (QSQLAHLINEKPQVIQEYES) form a DNA-binding region, H-T-H motif.

This sequence belongs to the MBF1 family. In terms of tissue distribution, expressed in leaves, roots, stems, petioles and shoots. Higher expression in flowers and siliques. Detected in leaf veins through development.

Its subcellular location is the nucleus. The protein localises to the nucleolus. Transcriptional coactivator that stimulates transcriptional activity by bridging regulatory proteins and TBP, thereby recruiting TBP to promoters occupied by DNA-binding regulators. The chain is Multiprotein-bridging factor 1b (MBF1B) from Arabidopsis thaliana (Mouse-ear cress).